The primary structure comprises 236 residues: Sugar fermentation stimulation protein homolog (236 aa).

It belongs to the SfsA family.

This chain is Sugar fermentation stimulation protein homolog, found in Gloeobacter violaceus (strain ATCC 29082 / PCC 7421).